We begin with the raw amino-acid sequence, 184 residues long: NADH-quinone oxidoreductase subunit B 1 (184 aa).

Positions 37, 38, 103, and 132 each coordinate [4Fe-4S] cluster.

The protein belongs to the complex I 20 kDa subunit family. NDH-1 is composed of 14 different subunits. Subunits NuoB, C, D, E, F, and G constitute the peripheral sector of the complex. [4Fe-4S] cluster is required as a cofactor.

The protein localises to the cell membrane. It carries out the reaction a quinone + NADH + 5 H(+)(in) = a quinol + NAD(+) + 4 H(+)(out). NDH-1 shuttles electrons from NADH, via FMN and iron-sulfur (Fe-S) centers, to quinones in the respiratory chain. The immediate electron acceptor for the enzyme in this species is believed to be a menaquinone. Couples the redox reaction to proton translocation (for every two electrons transferred, four hydrogen ions are translocated across the cytoplasmic membrane), and thus conserves the redox energy in a proton gradient. This is NADH-quinone oxidoreductase subunit B 1 from Streptomyces griseus subsp. griseus (strain JCM 4626 / CBS 651.72 / NBRC 13350 / KCC S-0626 / ISP 5235).